The following is a 651-amino-acid chain: MQRFKISSEFNPSGDQPGAIDSLVRGISCGAKEQTLLGVTGSGKTFTMASVIEQTQRPAIIIAHNKTLAAQLHEEMRSFFPENAVEYFVSYYDYYQPEAYIPQSDVYIEKDALINDKIDLLRHSATRSLLERRDVVVVASVSCIYGLGSPELYSEMTVPIALGMKLDMCQLQERLVELQYKHGNRYERGNFSVQGDVLSVFPSHYEDRIWKISFFGDEVDSIQEVDPKSGMVTLKLEKIKIFPNSHYVTPRPTLLQAISEIEKELDECALQFKQCNKIVEADRIVERTRFDIEMMRETGTCKGIENYSRYLCGKEAGDPPNTLLDYLPQDAIMFIDESHMTVPQIRAMYNGDRMRKANLINHGFRMPSALDNRPLTFAEWEDRKPTVVYVSATPGQYELQQTGGVATEQLIRPTGLLDPVCIVKGADGQIHDVMCESQATIARGYRVLITTLTKKMAENLTEYMREMGIKVAYLHSDVKTLERIEIISDLRLGVIDVLVGVNLMREGLDIPECALVGILDADKEGFLRSTTSLIQTIGRAARNVEGRVILYANVITKSMRTAMEETDRRRDIQRKYNQEHSIVPRTIQKPVQTSLSERVGSSRKKVSRDTNTDPANRDIVELQKEMLLCAENLDFERAVEIRNEIKRLTAP.

The Helicase ATP-binding domain maps to 25 to 411; sequence RGISCGAKEQ…TGGVATEQLI (387 aa). Position 38 to 45 (38 to 45) interacts with ATP; it reads GVTGSGKT. The Beta-hairpin motif lies at 91–114; that stretch reads YYDYYQPEAYIPQSDVYIEKDALI. The Helicase C-terminal domain occupies 427–591; that stretch reads DGQIHDVMCE…IVPRTIQKPV (165 aa). The segment at 593-615 is disordered; that stretch reads TSLSERVGSSRKKVSRDTNTDPA. In terms of domain architecture, UVR spans 616 to 651; the sequence is NRDIVELQKEMLLCAENLDFERAVEIRNEIKRLTAP.

The protein belongs to the UvrB family. Forms a heterotetramer with UvrA during the search for lesions. Interacts with UvrC in an incision complex.

The protein localises to the cytoplasm. In terms of biological role, the UvrABC repair system catalyzes the recognition and processing of DNA lesions. A damage recognition complex composed of 2 UvrA and 2 UvrB subunits scans DNA for abnormalities. Upon binding of the UvrA(2)B(2) complex to a putative damaged site, the DNA wraps around one UvrB monomer. DNA wrap is dependent on ATP binding by UvrB and probably causes local melting of the DNA helix, facilitating insertion of UvrB beta-hairpin between the DNA strands. Then UvrB probes one DNA strand for the presence of a lesion. If a lesion is found the UvrA subunits dissociate and the UvrB-DNA preincision complex is formed. This complex is subsequently bound by UvrC and the second UvrB is released. If no lesion is found, the DNA wraps around the other UvrB subunit that will check the other stand for damage. In Anaplasma marginale (strain St. Maries), this protein is UvrABC system protein B.